The following is a 101-amino-acid chain: DNA-binding protein Fis (101 aa).

A DNA-binding region (H-T-H motif) is located at residues 77–96; sequence QTRAANMLGINRGTLRKKLK.

The protein belongs to the transcriptional regulatory Fis family. In terms of assembly, homodimer.

Activates ribosomal RNA transcription. Plays a direct role in upstream activation of rRNA promoters. This is DNA-binding protein Fis from Shewanella halifaxensis (strain HAW-EB4).